The chain runs to 871 residues: Leucine--tRNA ligase (871 aa).

The 'HIGH' region signature appears at 42–52; the sequence is PYPSGSLHMGH. A 'KMSKS' region motif is present at residues 634-638; sequence TMSKS. Lys-637 contacts ATP.

The protein belongs to the class-I aminoacyl-tRNA synthetase family.

It is found in the cytoplasm. It carries out the reaction tRNA(Leu) + L-leucine + ATP = L-leucyl-tRNA(Leu) + AMP + diphosphate. The protein is Leucine--tRNA ligase of Nostoc punctiforme (strain ATCC 29133 / PCC 73102).